A 366-amino-acid polypeptide reads, in one-letter code: Polyamine aminopropyltransferase 2 (366 aa).

Residues 20 to 58 (KDKRSELDSDKFELEQQDKHDIQDKQDKQDEQNKQDKQV) show a composition bias toward basic and acidic residues. Residues 20-61 (KDKRSELDSDKFELEQQDKHDIQDKQDKQDEQNKQDKQVQSE) form a disordered region. In terms of domain architecture, PABS spans 74-305 (DVWDEISLKE…TDWGFHLATN (232 aa)). Gln-100 contributes to the S-methyl-5'-thioadenosine binding site. Positions 129 and 153 each coordinate spermidine. Residues Asp-173 and 207–208 (DA) contribute to the S-methyl-5'-thioadenosine site. Asp-225 (proton acceptor) is an active-site residue.

It belongs to the spermidine/spermine synthase family. Homodimer or homotetramer.

The protein resides in the cytoplasm. The enzyme catalyses S-adenosyl 3-(methylsulfanyl)propylamine + putrescine = S-methyl-5'-thioadenosine + spermidine + H(+). It functions in the pathway amine and polyamine biosynthesis; spermidine biosynthesis; spermidine from putrescine: step 1/1. Catalyzes the irreversible transfer of a propylamine group from the amino donor S-adenosylmethioninamine (decarboxy-AdoMet) to putrescine (1,4-diaminobutane) to yield spermidine. The protein is Polyamine aminopropyltransferase 2 of Bacillus cereus (strain ATCC 14579 / DSM 31 / CCUG 7414 / JCM 2152 / NBRC 15305 / NCIMB 9373 / NCTC 2599 / NRRL B-3711).